Reading from the N-terminus, the 434-residue chain is Arrestin domain-containing protein 1 (434 aa).

The segment at 292–349 is disordered; that stretch reads SPCPGRESSPGTLSLVVPSAPPQEEAEAVASGPHFSDPVSLSTKSHSQQQPLSAPLGS. The segment covering 330 to 343 has biased composition (polar residues); that stretch reads VSLSTKSHSQQQPL. 2 short sequence motifs (PPxY motif) span residues 401 to 404 and 414 to 417; these read PPEY and PPSY.

The protein belongs to the arrestin family. In terms of assembly, interacts (via PPxY motifs) with ITCH (via WW domains); the interaction is direct and participates in the recruitment of the ubiquitin-protein ligase ITCH to the NOTCH1 receptor. Interacts with ARRB1 and ARRB2; the interaction is direct. Interacts with TSG101; may recruit TSG101 to the plasma membrane. Interacts (via PPxY motifs) with WWP2 (via WW domains); ubiquitinates ARRDC1. Interacts with SLC11A2; controls the incorporation of SLC11A2 into extracellular vesicles through an ubiquitination-dependent mechanism. Interacts with WWP1 (via WW domains). Interacts with NEDD4 (via WW domains). Interacts with PDCD6IP. Post-translationally, ubiquitinated. Ubiquitination by WWP2; promotes localization to extracellular microvesicles. Ubiquitinated by WWP1.

Its subcellular location is the cell membrane. Its function is as follows. Functions as an adapter recruiting ubiquitin-protein ligases to their specific substrates. Through an ubiquitination-dependent mechanism plays for instance a role in the incorporation of SLC11A2 into extracellular vesicles. More generally, plays a role in the extracellular transport of proteins between cells through the release in the extracellular space of microvesicles. By participating to the ITCH-mediated ubiquitination and subsequent degradation of NOTCH1, negatively regulates the NOTCH signaling pathway. The protein is Arrestin domain-containing protein 1 of Mus musculus (Mouse).